We begin with the raw amino-acid sequence, 245 residues long: Ribosomal RNA small subunit methyltransferase G (245 aa).

S-adenosyl-L-methionine contacts are provided by residues G80, F85, D103–T105, A131–E132, and R150.

Belongs to the methyltransferase superfamily. RNA methyltransferase RsmG family.

The protein resides in the cytoplasm. Its function is as follows. Specifically methylates the N7 position of a guanine in 16S rRNA. In Deinococcus geothermalis (strain DSM 11300 / CIP 105573 / AG-3a), this protein is Ribosomal RNA small subunit methyltransferase G.